A 126-amino-acid chain; its full sequence is Thiocyanate hydrolase subunit alpha (126 aa).

Heterododecamer consisting of 4 alpha, 4 beta, and 4 gamma subunits.

It carries out the reaction thiocyanate + H2O + 2 H(+) = carbonyl sulfide + NH4(+). It participates in organosulfur degradation; thiocyanate degradation. Functionally, involved in the degradation of thiocyanate. In Thiobacillus thioparus, this protein is Thiocyanate hydrolase subunit alpha (scnA).